The following is a 419-amino-acid chain: Isocitrate dehydrogenase [NADP] 1 (419 aa).

NADP(+) is bound at residue T105. D-threo-isocitrate is bound by residues S114, N116, R120, R130, and R154. D308 is a binding site for Mg(2+). NADP(+)-binding positions include 340 to 346 (HGTAPKY), N353, Y392, and R396.

This sequence belongs to the isocitrate and isopropylmalate dehydrogenases family. Homodimer. Mg(2+) serves as cofactor. The cofactor is Mn(2+).

It carries out the reaction D-threo-isocitrate + NADP(+) = 2-oxoglutarate + CO2 + NADPH. IDH activity is not significantly affected by monovalent cations. The combined addition of Mn(2+) and another divalent cation results in the decrease of the activity. In terms of biological role, catalyzes the oxidative decarboxylation of isocitrate to 2-oxoglutarate and carbon dioxide with the concomitant reduction of NADP(+). Cannot use NAD(+). This chain is Isocitrate dehydrogenase [NADP] 1, found in Psychrobacter sp. (strain 13A).